The chain runs to 385 residues: SH3 domain-binding protein 5-like (385 aa).

The interval 1-58 (MAELRQIPGGRETPQGELRPEVVEDEVPRSPVAEEPGGGGSNSSEAKLSPREEEELDP) is disordered. Thr-13 carries the post-translational modification Phosphothreonine. Residues 18–28 (LRPEVVEDEVP) show a composition bias toward basic and acidic residues. Ser-30 and Ser-49 each carry phosphoserine. 2 coiled-coil regions span residues 59–140 (RIQE…YERA) and 169–272 (WQEM…EQIH). A disordered region spans residues 272 to 328 (HARRRGQPAHTPGQRRSSPVGAEAGPDGGEDADSGIIEGAEGGGLEEGVSLGPGAAP). Residues 318-328 (EGVSLGPGAAP) are compositionally biased toward low complexity. Ser-343, Ser-350, Ser-358, and Ser-362 each carry phosphoserine. Residues 359-385 (DHTSLDGQELGPRSGGRGGRHQRSISL) form a disordered region. Basic residues predominate over residues 376–385 (GGRHQRSISL).

The protein belongs to the SH3BP5 family.

Its function is as follows. Functions as a guanine nucleotide exchange factor (GEF) for RAB11A. This Bos taurus (Bovine) protein is SH3 domain-binding protein 5-like (SH3BP5L).